Here is a 137-residue protein sequence, read N- to C-terminus: Fatty acid-binding protein homolog 7 (137 aa).

This sequence belongs to the calycin superfamily. Fatty-acid binding protein (FABP) family.

This is Fatty acid-binding protein homolog 7 (lbp-7) from Caenorhabditis elegans.